The sequence spans 225 residues: Insulin-induced gene 2 protein (225 aa).

Topologically, residues M1 to L28 are cytoplasmic. The helical transmembrane segment at V29–I51 threads the bilayer. The Lumenal segment spans residues Q52–A70. The chain crosses the membrane as a helical span at residues W71–Y88. Residues P89–R103 are Cytoplasmic-facing. A helical transmembrane segment spans residues E104–D126. Residues F127–N129 are Lumenal-facing. A helical membrane pass occupies residues N130–F148. The Cytoplasmic portion of the chain corresponds to D149 to S153. Residues G154–N175 traverse the membrane as a helical segment. The Lumenal portion of the chain corresponds to G176–R189. Residues S190–G207 traverse the membrane as a helical segment. Residues R208–D225 are Cytoplasmic-facing. The KxHxx motif lies at A219–D225.

Belongs to the INSIG family. Interacts with SCAP; interaction is direct and only takes place in the presence of sterols; it prevents interaction between SCAP and the coat protein complex II (COPII). Associates with the SCAP-SREBP complex; association is mediated via its interaction with SCAP and only takes place in the presence of sterols.

The protein localises to the endoplasmic reticulum membrane. Oxysterol-binding protein that mediates feedback control of cholesterol synthesis by controlling both endoplasmic reticulum to Golgi transport of SCAP and degradation of HMGCR. Acts as a negative regulator of cholesterol biosynthesis by mediating the retention of the SCAP-SREBP complex in the endoplasmic reticulum, thereby blocking the processing of sterol regulatory element-binding proteins (SREBPs). Binds oxysterol, including 22-hydroxycholesterol, 24-hydroxycholesterol, 25-hydroxycholesterol and 27-hydroxycholesterol, regulating interaction with SCAP and retention of the SCAP-SREBP complex in the endoplasmic reticulum. In presence of oxysterol, interacts with SCAP, retaining the SCAP-SREBP complex in the endoplasmic reticulum, thereby preventing SCAP from escorting SREBPs to the Golgi. Sterol deprivation reduces oxysterol-binding, disrupting the interaction between INSIG2 and SCAP, thereby promoting Golgi transport of the SCAP-SREBP complex, followed by processing and nuclear translocation of SREBPs. Also regulates cholesterol synthesis by regulating degradation of HMGCR. The sequence is that of Insulin-induced gene 2 protein from Gallus gallus (Chicken).